A 205-amino-acid polypeptide reads, in one-letter code: Histone H1, early embryonic (205 aa).

Disordered stretches follow at residues 1-21 (MAEKNSSKKVTTKKPAAHPPA) and 94-205 (AKAQ…AKSK). Residues 17-91 (AHPPAAEMVA…GASGSFKVNV (75 aa)) form the H15 domain. Residues 98–124 (ASEKAKKEKEKAKLLAQREKAKEKGCS) are compositionally biased toward basic and acidic residues. 2 stretches are compositionally biased toward basic residues: residues 135 to 150 (PKKVKAAPKKAKKPVK) and 157 to 205 (EKKK…AKSK).

The protein belongs to the histone H1/H5 family.

It is found in the nucleus. It localises to the chromosome. In terms of biological role, histones H1 are necessary for the condensation of nucleosome chains into higher-order structures. The polypeptide is Histone H1, early embryonic (Strongylocentrotus purpuratus (Purple sea urchin)).